A 391-amino-acid polypeptide reads, in one-letter code: uncharacterized protein (391 aa).

Low complexity predominate over residues 118-149 (SINSLPPTTTTTTTTTTTTTIPNNNNNITLSP). Disordered regions lie at residues 118–162 (SINS…HQHP), 184–258 (QTNV…TPRN), 272–327 (NNNL…NNLN), and 337–356 (LNLN…NNNN). A compositionally biased stretch (basic residues) spans 150–162 (QHHHGQQQHHQHP). Over residues 186–211 (NVNNNNNNNNNNNNNNNSNNNNNNNN) the composition is skewed to low complexity. Residues 212 to 223 (DFSTPNSFSVPT) are compositionally biased toward polar residues. Low complexity predominate over residues 244–256 (NTPNNSTSNPTTP).

This is an uncharacterized protein from Dictyostelium discoideum (Social amoeba).